A 169-amino-acid polypeptide reads, in one-letter code: 6,7-dimethyl-8-ribityllumazine synthase (169 aa).

5-amino-6-(D-ribitylamino)uracil contacts are provided by residues Phe24, Ala58 to Glu60, and Ala82 to Ile84. A (2S)-2-hydroxy-3-oxobutyl phosphate-binding site is contributed by Glu87–Thr88. His90 serves as the catalytic Proton donor. Asn115 is a binding site for 5-amino-6-(D-ribitylamino)uracil. Position 129 (Arg129) interacts with (2S)-2-hydroxy-3-oxobutyl phosphate.

The protein belongs to the DMRL synthase family.

The catalysed reaction is (2S)-2-hydroxy-3-oxobutyl phosphate + 5-amino-6-(D-ribitylamino)uracil = 6,7-dimethyl-8-(1-D-ribityl)lumazine + phosphate + 2 H2O + H(+). Its pathway is cofactor biosynthesis; riboflavin biosynthesis; riboflavin from 2-hydroxy-3-oxobutyl phosphate and 5-amino-6-(D-ribitylamino)uracil: step 1/2. Functionally, catalyzes the formation of 6,7-dimethyl-8-ribityllumazine by condensation of 5-amino-6-(D-ribitylamino)uracil with 3,4-dihydroxy-2-butanone 4-phosphate. This is the penultimate step in the biosynthesis of riboflavin. The sequence is that of 6,7-dimethyl-8-ribityllumazine synthase from Burkholderia vietnamiensis (strain G4 / LMG 22486) (Burkholderia cepacia (strain R1808)).